A 1236-amino-acid polypeptide reads, in one-letter code: Chitinase-like protein PB1E7.04c (1236 aa).

The first 19 residues, 1-19, serve as a signal peptide directing secretion; the sequence is MRLISSLLLLVYSARLALS. N21, N24, N54, N123, N225, N237, N255, N267, N277, N288, and N309 each carry an N-linked (GlcNAc...) asparagine glycan. The region spanning 26–325 is the GH18 domain; it reads TAVLGYWGSN…EAIHKILDTK (300 aa). 3 disordered regions span residues 326 to 367, 449 to 497, and 584 to 625; these read SKHS…TSSA, VSSI…QSTL, and TSSP…STIL. A compositionally biased stretch (polar residues) spans 339–351; the sequence is QGLESTSSIALNP. The segment covering 352 to 367 has biased composition (low complexity); that stretch reads TSSISSTSSSSSTSSA. Residues N715, N737, N768, N786, and N813 are each glycosylated (N-linked (GlcNAc...) asparagine). Disordered stretches follow at residues 804–836, 868–927, 946–979, and 1125–1159; these read ISTS…LAAN, TTAL…TSSS, TPTS…SSIA, and AASG…TPSN. The span at 810–821 shows a compositional bias: polar residues; the sequence is NEYNTSFHAPTV. Positions 822 to 832 are enriched in low complexity; that stretch reads SSTTSSSSTTS. Low complexity predominate over residues 1125-1156; the sequence is AASGSSTVTSSATASSSSSAATTADSSVTTDT.

The protein belongs to the glycosyl hydrolase 18 family. Chitinase class III subfamily.

It is found in the secreted. In Schizosaccharomyces pombe (strain 972 / ATCC 24843) (Fission yeast), this protein is Chitinase-like protein PB1E7.04c.